Consider the following 3390-residue polypeptide: Genome polyprotein (3390 aa).

The interval 1 to 15 (MNNQRKKTGKPSINM) is interaction with host EXOC1. Over 1 to 100 (MNNQRKKTGK…MLSIINKRKK (100 aa)) the chain is Cytoplasmic. The hydrophobic; homodimerization of capsid protein C stretch occupies residues 37–72 (LLNGQGPMKLVMAFIAFLRFLAIPPTAGVLARWGTF). A propeptide spans 101–114 (TSLCLMMMLPATLA) (ER anchor for the capsid protein C, removed in mature form by serine protease NS3). Residues 101 to 118 (TSLCLMMMLPATLAFHLT) form a helical membrane-spanning segment. Residues 119 to 243 (SRDGEPRMIV…VEKVETWALR (125 aa)) lie on the Extracellular side of the membrane. Asparagine 183 is a glycosylation site (N-linked (GlcNAc...) asparagine; by host). A helical transmembrane segment spans residues 244 to 264 (HPGFTILALFLAHYIGTSLTQ). Lysine 265 is a topological domain (cytoplasmic). Residues 266 to 280 (VVIFILLMLVTPSMT) traverse the membrane as a helical segment. At 281-723 (MRCVGVGNRD…VHQIFGSAYT (443 aa)) the chain is on the extracellular side. 4 disulfide bridges follow: cysteine 283–cysteine 310, cysteine 340–cysteine 401, cysteine 354–cysteine 385, and cysteine 372–cysteine 396. N-linked (GlcNAc...) asparagine; by host glycosylation is present at asparagine 347. A fusion peptide region spans residues 378–391 (DRGWGNGCGLFGKG). Asparagine 433 carries an N-linked (GlcNAc...) asparagine; by host glycan. 2 disulfides stabilise this stretch: cysteine 463/cysteine 563 and cysteine 580/cysteine 611. Residues 724-744 (ALFSGVSWIMKIGIGVLLTWI) form a helical membrane-spanning segment. Over 745–750 (GLNSKN) the chain is Cytoplasmic. Residues 751–771 (TSMSFSCIAIGIITLYLGVVV) form a helical membrane-spanning segment. The Extracellular portion of the chain corresponds to 772–1193 (QADMGCVINW…MIGSNASDRM (422 aa)). 6 disulfides stabilise this stretch: cysteine 777–cysteine 788, cysteine 828–cysteine 916, cysteine 952–cysteine 996, cysteine 1053–cysteine 1102, cysteine 1064–cysteine 1086, and cysteine 1085–cysteine 1089. Residues asparagine 903 and asparagine 980 are each glycosylated (N-linked (GlcNAc...) asparagine; by host). N-linked (GlcNAc...) asparagine; by host glycosylation is found at asparagine 1132 and asparagine 1188. Residues 1194-1218 (GMGVTYLALIATFKIQPFLALGFFL) form a helical membrane-spanning segment. At 1219–1224 (RKLTSR) the chain is on the cytoplasmic side. The chain crosses the membrane as a helical span at residues 1225–1243 (ENLLLGVGLAMAATLRLPE). Topologically, residues 1244 to 1267 (DIEQMANGIALGLMALKLITQFET) are lumenal. The helical transmembrane segment at 1268–1288 (YQLWTALVSLTCSNTIFTLTV) threads the bilayer. Position 1289 (alanine 1289) is a topological domain, cytoplasmic. A helical membrane pass occupies residues 1290–1308 (WRTATLILAGISLLPVCQS). Residues 1309–1315 (SSMRKTD) are Lumenal-facing. Residues 1316-1336 (WLPMTVAAMGVPPLPLFIFSL) form a helical membrane-spanning segment. Residues 1337 to 1344 (KDTLKRRS) are Cytoplasmic-facing. Residues 1345–1365 (WPLNEGVMAVGLVSILASSLL) form a helical membrane-spanning segment. Over 1366–1368 (RND) the chain is Lumenal. A helical transmembrane segment spans residues 1369–1389 (VPMAGPLVAGGLLIACYVITG). Residues 1390 to 1443 (TSADLTVEKAADVTWEEEAEQTGVSHNLMITVDDDGTMRIKDDETENILTVLLK) are Cytoplasmic-facing. Residues 1396–1435 (VEKAADVTWEEEAEQTGVSHNLMITVDDDGTMRIKDDETE) are interacts with and activates NS3 protease. An intramembrane region (helical) is located at residues 1444-1464 (TALLIVSGIFPCSIPATLLVW). Residues 1465 to 2146 (HTWQKQTQRS…VEELPETMET (682 aa)) lie on the Cytoplasmic side of the membrane. The Peptidase S7 domain occupies 1474–1651 (SGVLWDVPSP…NAEPDGPTPE (178 aa)). Catalysis depends on charge relay system; for serine protease NS3 activity residues histidine 1524, aspartate 1548, and serine 1608. The 157-residue stretch at 1654–1810 (EEMFKKRNLT…QSNAPIQDEE (157 aa)) folds into the Helicase ATP-binding domain. Residues 1658 to 1661 (KKRN) form an important for RNA-binding region. ATP is bound at residue 1667 to 1674 (LHPGSGKT). The short motif at 1758 to 1761 (DEAH) is the DEAH box element. Residues 1821 to 1986 (GNEWITDFVG…GIIPALFEPE (166 aa)) form the Helicase C-terminal domain. Lysine 1862 is modified (N6-acetyllysine; by host). A helical transmembrane segment spans residues 2147 to 2167 (LLLLGLMILLTGGAMLFLISG). Over 2168-2169 (KG) the chain is Lumenal. An intramembrane region (helical) is located at residues 2170-2190 (IGKTSIGLICVIASSGMLWMA). Residue aspartate 2191 is a topological domain, lumenal. A helical membrane pass occupies residues 2192-2212 (VPLQWIASAIVLEFFMMVLLI). The Cytoplasmic segment spans residues 2213-2227 (PEPEKQRTPQDNQLA). A helical membrane pass occupies residues 2228–2248 (YVVIGILTLAAIVAANEMGLL). Residues 2249-2273 (ETTKRDLGMSKEPGVVSPTSYLDVD) lie on the Lumenal side of the membrane. Residues 2274-2294 (LHPASAWTLYAVATTVITPML) constitute an intramembrane region (helical). The Lumenal segment spans residues 2295–2305 (RHTIENSTANV). Residues asparagine 2300 and asparagine 2304 are each glycosylated (N-linked (GlcNAc...) asparagine; by host). Residues 2306 to 2326 (SLAAIANQAVVLMGLDKGWPI) constitute an intramembrane region (helical). Residues 2327 to 2346 (SKMDLGVPLLALGCYSQVNP) lie on the Lumenal side of the membrane. A helical membrane pass occupies residues 2347–2367 (LTLIAAVLLLVTHYAIIGPGL). The Cytoplasmic segment spans residues 2368–2412 (QAKATREAQKRTAAGIMKNPTVDGIMTIDLDPVIYDSKFEKQLGQ). The helical transmembrane segment at 2413–2433 (VMLLVLCAVQLLLMRTSWALC) threads the bilayer. Residues 2434-2458 (EVLTLATGPITTLWEGSPGKFWNTT) are Lumenal-facing. Asparagine 2456 carries N-linked (GlcNAc...) asparagine; by host glycosylation. A helical transmembrane segment spans residues 2459 to 2479 (IAVSMANIFRGSYLAGAGLAF). The Cytoplasmic segment spans residues 2480–3390 (SIMKSVGTGK…KEEESEGAIW (911 aa)). Residues 2492 to 2753 (TGSQGETLGE…DVDLGAGTRH (262 aa)) form the mRNA cap 0-1 NS5-type MT domain. Serine 2546 is a binding site for S-adenosyl-L-methionine. A Phosphoserine modification is found at serine 2546. Catalysis depends on lysine 2551, which acts as the For 2'-O-MTase activity. The short motif at 2567 to 2570 (VIDL) is the SUMO-interacting motif element. The S-adenosyl-L-methionine site is built by glycine 2576, tryptophan 2577, threonine 2594, lysine 2595, aspartate 2621, and valine 2622. Catalysis depends on aspartate 2636, which acts as the For 2'-O-MTase activity. S-adenosyl-L-methionine is bound at residue isoleucine 2637. Residues lysine 2670 and glutamate 2706 each act as for 2'-O-MTase activity in the active site. Tyrosine 2708 contributes to the S-adenosyl-L-methionine binding site. 4 residues coordinate Zn(2+): glutamate 2927, histidine 2931, cysteine 2936, and cysteine 2939. In terms of domain architecture, RdRp catalytic spans 3018 to 3168 (AMYADDTAGW…PIDDRFANAL (151 aa)). Histidine 3202, cysteine 3218, and cysteine 3337 together coordinate Zn(2+).

The protein in the N-terminal section; belongs to the class I-like SAM-binding methyltransferase superfamily. mRNA cap 0-1 NS5-type methyltransferase family. In terms of assembly, homodimer. Interacts (via N-terminus) with host EXOC1 (via C-terminus); this interaction results in EXOC1 degradation through the proteasome degradation pathway. As to quaternary structure, forms heterodimers with envelope protein E in the endoplasmic reticulum and Golgi. Homodimer; in the endoplasmic reticulum and Golgi. Interacts with protein prM. Interacts with non-structural protein 1. In terms of assembly, homodimer; Homohexamer when secreted. Interacts with envelope protein E. As to quaternary structure, interacts (via N-terminus) with serine protease NS3. Forms a heterodimer with serine protease NS3. May form homooligomers. In terms of assembly, forms a heterodimer with NS2B. Interacts with NS4B. Interacts with unphosphorylated RNA-directed RNA polymerase NS5; this interaction stimulates RNA-directed RNA polymerase NS5 guanylyltransferase activity. As to quaternary structure, interacts with host MAVS; this interaction inhibits the synthesis of IFN-beta. Interacts with host AUP1; the interaction occurs in the presence of Dengue virus NS4B and induces lipophagy which facilitates production of virus progeny particles. Interacts with serine protease NS3. In terms of assembly, homodimer. Interacts with host STAT2; this interaction inhibits the phosphorylation of the latter, and, when all viral proteins are present (polyprotein), targets STAT2 for degradation. Interacts with serine protease NS3. Post-translationally, specific enzymatic cleavages in vivo yield mature proteins. Cleavages in the lumen of endoplasmic reticulum are performed by host signal peptidase, whereas cleavages in the cytoplasmic side are performed by serine protease NS3. Signal cleavage at the 2K-4B site requires a prior NS3 protease-mediated cleavage at the 4A-2K site. In terms of processing, cleaved in post-Golgi vesicles by a host furin, releasing the mature small envelope protein M, and peptide pr. This cleavage is incomplete as up to 30% of viral particles still carry uncleaved prM. N-glycosylated. Post-translationally, N-glycosylated. The excreted form is glycosylated and this is required for efficient secretion of the protein from infected cells. In terms of processing, acetylated by host KAT5. Acetylation modulates NS3 RNA-binding and unwinding activities and plays an important positive role for viral replication. Sumoylation of RNA-directed RNA polymerase NS5 increases NS5 protein stability allowing proper viral RNA replication. Post-translationally, phosphorylated on serines residues. This phosphorylation may trigger NS5 nuclear localization.

It localises to the virion. Its subcellular location is the host nucleus. It is found in the host cytoplasm. The protein resides in the host perinuclear region. The protein localises to the secreted. It localises to the virion membrane. Its subcellular location is the host endoplasmic reticulum membrane. It is found in the host mitochondrion. The catalysed reaction is Selective hydrolysis of -Xaa-Xaa-|-Yaa- bonds in which each of the Xaa can be either Arg or Lys and Yaa can be either Ser or Ala.. It carries out the reaction RNA(n) + a ribonucleoside 5'-triphosphate = RNA(n+1) + diphosphate. It catalyses the reaction a ribonucleoside 5'-triphosphate + H2O = a ribonucleoside 5'-diphosphate + phosphate + H(+). The enzyme catalyses ATP + H2O = ADP + phosphate + H(+). The catalysed reaction is a 5'-end (5'-triphosphoguanosine)-ribonucleoside in mRNA + S-adenosyl-L-methionine = a 5'-end (N(7)-methyl 5'-triphosphoguanosine)-ribonucleoside in mRNA + S-adenosyl-L-homocysteine. It carries out the reaction a 5'-end (N(7)-methyl 5'-triphosphoguanosine)-ribonucleoside in mRNA + S-adenosyl-L-methionine = a 5'-end (N(7)-methyl 5'-triphosphoguanosine)-(2'-O-methyl-ribonucleoside) in mRNA + S-adenosyl-L-homocysteine + H(+). In terms of biological role, plays a role in virus budding by binding to the cell membrane and gathering the viral RNA into a nucleocapsid that forms the core of a mature virus particle. During virus entry, may induce genome penetration into the host cytoplasm after hemifusion induced by the surface proteins. Can migrate to the cell nucleus where it modulates host functions. Overcomes the anti-viral effects of host EXOC1 by sequestering and degrading the latter through the proteasome degradation pathway. Its function is as follows. Inhibits RNA silencing by interfering with host Dicer. Prevents premature fusion activity of envelope proteins in trans-Golgi by binding to envelope protein E at pH6.0. After virion release in extracellular space, gets dissociated from E dimers. Functionally, acts as a chaperone for envelope protein E during intracellular virion assembly by masking and inactivating envelope protein E fusion peptide. prM is the only viral peptide matured by host furin in the trans-Golgi network probably to avoid catastrophic activation of the viral fusion activity in acidic Golgi compartment prior to virion release. prM-E cleavage is inefficient, and many virions are only partially matured. These uncleaved prM would play a role in immune evasion. In terms of biological role, may play a role in virus budding. Exerts cytotoxic effects by activating a mitochondrial apoptotic pathway through M ectodomain. May display a viroporin activity. Its function is as follows. Binds to host cell surface receptor and mediates fusion between viral and cellular membranes. Envelope protein is synthesized in the endoplasmic reticulum in the form of heterodimer with protein prM. They play a role in virion budding in the ER, and the newly formed immature particle is covered with 60 spikes composed of heterodimer between precursor prM and envelope protein E. The virion is transported to the Golgi apparatus where the low pH causes dissociation of PrM-E heterodimers and formation of E homodimers. prM-E cleavage is inefficient, and many virions are only partially matured. These uncleaved prM would play a role in immune evasion. Involved in immune evasion, pathogenesis and viral replication. Once cleaved off the polyprotein, is targeted to three destinations: the viral replication cycle, the plasma membrane and the extracellular compartment. Essential for viral replication. Required for formation of the replication complex and recruitment of other non-structural proteins to the ER-derived membrane structures. Excreted as a hexameric lipoparticle that plays a role against host immune response. Antagonizing the complement function. Binds to the host macrophages and dendritic cells. Inhibits signal transduction originating from Toll-like receptor 3 (TLR3). Functionally, disrupts the host endothelial glycocalyx layer of host pulmonary microvascular endothelial cells, inducing degradation of sialic acid and shedding of heparan sulfate proteoglycans. NS1 induces expression of sialidases, heparanase, and activates cathepsin L, which activates heparanase via enzymatic cleavage. These effects are probably linked to the endothelial hyperpermeability observed in severe dengue disease. In terms of biological role, component of the viral RNA replication complex that functions in virion assembly and antagonizes the host immune response. Its function is as follows. Required cofactor for the serine protease function of NS3. May have membrane-destabilizing activity and form viroporins. Displays three enzymatic activities: serine protease, NTPase and RNA helicase. NS3 serine protease, in association with NS2B, performs its autocleavage and cleaves the polyprotein at dibasic sites in the cytoplasm: C-prM, NS2A-NS2B, NS2B-NS3, NS3-NS4A, NS4A-2K and NS4B-NS5. NS3 RNA helicase binds RNA and unwinds dsRNA in the 3' to 5' direction. Functionally, regulates the ATPase activity of the NS3 helicase activity. NS4A allows NS3 helicase to conserve energy during unwinding. Plays a role in the inhibition of the host innate immune response. Interacts with host MAVS and thereby prevents the interaction between RIGI and MAVS. In turn, IFN-beta production is impaired. Interacts with host AUP1 which mediates induction of lipophagy in host cells and facilitates production of virus progeny particles. In terms of biological role, functions as a signal peptide for NS4B and is required for the interferon antagonism activity of the latter. Its function is as follows. Induces the formation of ER-derived membrane vesicles where the viral replication takes place. Inhibits interferon (IFN)-induced host STAT1 phosphorylation and nuclear translocation, thereby preventing the establishment of cellular antiviral state by blocking the IFN-alpha/beta pathway. Replicates the viral (+) and (-) RNA genome, and performs the capping of genomes in the cytoplasm. NS5 methylates viral RNA cap at guanine N-7 and ribose 2'-O positions. Besides its role in RNA genome replication, also prevents the establishment of cellular antiviral state by blocking the interferon-alpha/beta (IFN-alpha/beta) signaling pathway. Inhibits host TYK2 and STAT2 phosphorylation, thereby preventing activation of JAK-STAT signaling pathway. In Dengue virus type 3 (strain China/80-2/1980) (DENV-3), this protein is Genome polyprotein.